We begin with the raw amino-acid sequence, 422 residues long: L-2-hydroxyglutarate dehydrogenase (422 aa).

The protein belongs to the L2HGDH family. It depends on FAD as a cofactor.

The protein resides in the cell inner membrane. It carries out the reaction (S)-2-hydroxyglutarate + a quinone = a quinol + 2-oxoglutarate. It participates in amino-acid degradation. Functionally, catalyzes the dehydrogenation of L-2-hydroxyglutarate (L2HG) to alpha-ketoglutarate and couples to the respiratory chain by feeding electrons from the reaction into the membrane quinone pool. Functions in a L-lysine degradation pathway that proceeds via cadaverine, glutarate and L-2-hydroxyglutarate. Also displays some oxidase activity in vitro on L-2-hydroxyglutarate with O2 as the electron acceptor, but this activity is most likely not physiological. The polypeptide is L-2-hydroxyglutarate dehydrogenase (Salmonella houtenae).